The primary structure comprises 176 residues: Adenylyl-sulfate kinase (176 aa).

Glycine 12–threonine 19 lines the ATP pocket. Catalysis depends on serine 86, which acts as the Phosphoserine intermediate.

Belongs to the APS kinase family.

It catalyses the reaction adenosine 5'-phosphosulfate + ATP = 3'-phosphoadenylyl sulfate + ADP + H(+). It participates in sulfur metabolism; hydrogen sulfide biosynthesis; sulfite from sulfate: step 2/3. In terms of biological role, catalyzes the synthesis of activated sulfate. The polypeptide is Adenylyl-sulfate kinase (Synechococcus sp. (strain JA-3-3Ab) (Cyanobacteria bacterium Yellowstone A-Prime)).